The sequence spans 425 residues: Serine--tRNA ligase (425 aa).

233–235 serves as a coordination point for L-serine; it reads TAE. ATP is bound at residue 264-266; it reads RRE. Residue Glu-287 coordinates L-serine. 351-354 provides a ligand contact to ATP; sequence EISS. Position 387 (Ser-387) interacts with L-serine.

It belongs to the class-II aminoacyl-tRNA synthetase family. Type-1 seryl-tRNA synthetase subfamily. Homodimer. The tRNA molecule binds across the dimer.

It is found in the cytoplasm. The enzyme catalyses tRNA(Ser) + L-serine + ATP = L-seryl-tRNA(Ser) + AMP + diphosphate + H(+). The catalysed reaction is tRNA(Sec) + L-serine + ATP = L-seryl-tRNA(Sec) + AMP + diphosphate + H(+). It functions in the pathway aminoacyl-tRNA biosynthesis; selenocysteinyl-tRNA(Sec) biosynthesis; L-seryl-tRNA(Sec) from L-serine and tRNA(Sec): step 1/1. Catalyzes the attachment of serine to tRNA(Ser). Is also able to aminoacylate tRNA(Sec) with serine, to form the misacylated tRNA L-seryl-tRNA(Sec), which will be further converted into selenocysteinyl-tRNA(Sec). The protein is Serine--tRNA ligase of Thermotoga petrophila (strain ATCC BAA-488 / DSM 13995 / JCM 10881 / RKU-1).